An 81-amino-acid polypeptide reads, in one-letter code: Defensin-like protein 130 (81 aa).

The N-terminal stretch at 1 to 21 (MTKNTSLTIFMVVLVIGMLYT) is a signal peptide. 4 disulfides stabilise this stretch: C32/C81, C41/C63, C46/C75, and C50/C77.

The protein belongs to the DEFL family.

It localises to the secreted. The protein is Defensin-like protein 130 (LCR28) of Arabidopsis thaliana (Mouse-ear cress).